A 284-amino-acid chain; its full sequence is 4-diphosphocytidyl-2-C-methyl-D-erythritol kinase (284 aa).

Residue K14 is part of the active site. 98 to 108 (PMGGGLGGGSS) is a binding site for ATP. The active site involves D140.

Belongs to the GHMP kinase family. IspE subfamily.

The enzyme catalyses 4-CDP-2-C-methyl-D-erythritol + ATP = 4-CDP-2-C-methyl-D-erythritol 2-phosphate + ADP + H(+). It participates in isoprenoid biosynthesis; isopentenyl diphosphate biosynthesis via DXP pathway; isopentenyl diphosphate from 1-deoxy-D-xylulose 5-phosphate: step 3/6. Functionally, catalyzes the phosphorylation of the position 2 hydroxy group of 4-diphosphocytidyl-2C-methyl-D-erythritol. The polypeptide is 4-diphosphocytidyl-2-C-methyl-D-erythritol kinase (Shewanella denitrificans (strain OS217 / ATCC BAA-1090 / DSM 15013)).